The chain runs to 220 residues: Small ribosomal subunit protein uS3c (220 aa).

A KH type-2 domain is found at 43–120 (IQHYVEKNTR…RLNIAIIRVA (78 aa)).

It belongs to the universal ribosomal protein uS3 family. In terms of assembly, part of the 30S ribosomal subunit.

Its subcellular location is the plastid. It is found in the chloroplast. The protein is Small ribosomal subunit protein uS3c (rps3) of Piper cenocladum (Ant piper).